We begin with the raw amino-acid sequence, 216 residues long: MSQQASVGRGLPPDVLAEQVELWWSQQPRRSLLCFSVAVILVAGCGAGGVALLSSTSSRSGEWRLAVGTVLCLLALLVLVKQLMSSAVQDMNCIRQAQHVALLRSGGGADAVVVLLSGFVLLVTGLTLAGLAAAPAPARPLAAMLSVGITLASLGSVLLLGLLLYQVGVSGHCPPICTEAFSAQNGHGDNSSIFSISGQLSSGQRHETTSSIASLI.

The next 4 helical transmembrane spans lie at 32–52 (LLCFSVAVILVAGCGAGGVAL), 65–85 (LAVGTVLCLLALLVLVKQLMS), 111–131 (AVVVLLSGFVLLVTGLTLAGL), and 144–164 (MLSVGITLASLGSVLLLGLLL).

Its subcellular location is the membrane. The chain is Transmembrane protein 125 (Tmem125) from Mus musculus (Mouse).